The primary structure comprises 189 residues: Elongation factor P (189 aa).

An N6-(3,6-diaminohexanoyl)-5-hydroxylysine modification is found at lysine 35.

It belongs to the elongation factor P family. In terms of processing, may be beta-lysylated on the epsilon-amino group of Lys-35 by the combined action of EpmA and EpmB, and then hydroxylated on the C5 position of the same residue by EpmC (if this protein is present). Lysylation is critical for the stimulatory effect of EF-P on peptide-bond formation. The lysylation moiety may extend toward the peptidyltransferase center and stabilize the terminal 3-CCA end of the tRNA. Hydroxylation of the C5 position on Lys-35 may allow additional potential stabilizing hydrogen-bond interactions with the P-tRNA.

It localises to the cytoplasm. The protein operates within protein biosynthesis; polypeptide chain elongation. Functionally, involved in peptide bond synthesis. Alleviates ribosome stalling that occurs when 3 or more consecutive Pro residues or the sequence PPG is present in a protein, possibly by augmenting the peptidyl transferase activity of the ribosome. Modification of Lys-35 is required for alleviation. The protein is Elongation factor P of Wigglesworthia glossinidia brevipalpis.